Reading from the N-terminus, the 224-residue chain is Ethylene-inducing xylanase 5 (224 aa).

An N-terminal signal peptide occupies residues 1 to 16 (MLKSLVVLLLTSRVIA). Residues 32–218 (QATPNSQGTH…SSGFAEMTVA (187 aa)) form the GH11 domain. N-linked (GlcNAc...) asparagine glycosylation occurs at Asn-88. Residue Glu-117 is the Nucleophile of the active site. Glu-205 acts as the Proton donor in catalysis.

It belongs to the glycosyl hydrolase 11 (cellulase G) family.

The enzyme catalyses Endohydrolysis of (1-&gt;4)-beta-D-xylosidic linkages in xylans.. It participates in glycan degradation; xylan degradation. Functionally, endo-1,4-beta-xylanase involved in the hydrolysis of xylan, a major structural heterogeneous polysaccharide found in plant biomass representing the second most abundant polysaccharide in the biosphere, after cellulose. May act as an elicitor of plant defense responses in certain plants but does not exhibit any cell death when transiently expressed in N.benthamiana. The protein is Ethylene-inducing xylanase 5 of Verticillium dahliae (strain VdLs.17 / ATCC MYA-4575 / FGSC 10137) (Verticillium wilt).